A 429-amino-acid polypeptide reads, in one-letter code: Adenylosuccinate synthetase (429 aa).

GTP-binding positions include 12-18 and 40-42; these read GDEGKGK and GHT. Asp-13 serves as the catalytic Proton acceptor. Positions 13 and 40 each coordinate Mg(2+). IMP is bound by residues 13–16, 38–41, Thr-129, Arg-143, Gln-223, Thr-238, and Arg-302; these read DEGK and NAGH. His-41 (proton donor) is an active-site residue. 298–304 is a substrate binding site; it reads TVTGRKR. Residues Arg-304, 330–332, and 412–414 contribute to the GTP site; these read KLD and STS.

Belongs to the adenylosuccinate synthetase family. In terms of assembly, homodimer. Mg(2+) is required as a cofactor.

The protein localises to the cytoplasm. The enzyme catalyses IMP + L-aspartate + GTP = N(6)-(1,2-dicarboxyethyl)-AMP + GDP + phosphate + 2 H(+). Its pathway is purine metabolism; AMP biosynthesis via de novo pathway; AMP from IMP: step 1/2. Functionally, plays an important role in the de novo pathway of purine nucleotide biosynthesis. Catalyzes the first committed step in the biosynthesis of AMP from IMP. This is Adenylosuccinate synthetase from Novosphingobium aromaticivorans (strain ATCC 700278 / DSM 12444 / CCUG 56034 / CIP 105152 / NBRC 16084 / F199).